The primary structure comprises 179 residues: Adenine phosphoribosyltransferase (179 aa).

This sequence belongs to the purine/pyrimidine phosphoribosyltransferase family. Homodimer.

The protein resides in the cytoplasm. It catalyses the reaction AMP + diphosphate = 5-phospho-alpha-D-ribose 1-diphosphate + adenine. Its pathway is purine metabolism; AMP biosynthesis via salvage pathway; AMP from adenine: step 1/1. Functionally, catalyzes a salvage reaction resulting in the formation of AMP, that is energically less costly than de novo synthesis. The sequence is that of Adenine phosphoribosyltransferase from Gluconobacter oxydans (strain 621H) (Gluconobacter suboxydans).